A 115-amino-acid chain; its full sequence is Pycsar effector protein TpPycTM (115 aa).

Helical transmembrane passes span Ile-44–Asn-64 and Val-74–Val-94.

Its subcellular location is the cell inner membrane. In terms of biological role, pycsar (pyrimidine cyclase system for antiphage resistance) provides immunity against bacteriophage. The pyrimidine cyclase (PycC) synthesizes cyclic nucleotides in response to infection; these serve as specific second messenger signals. The signals activate the adjacent effector, leading to bacterial cell death and abortive phage infection. A clade C Pycsar system. Its function is as follows. The effector gene of a two-gene Pycsar system. Expression of this and adjacent uridylate cyclase TpPycC (AC A0A1T4LJ54) probably confers resistance to bacteriophage. The genes are probably only expressed in response to bacteriophage infection. Probably only responds to cUMP (produced by its cognate NTP cyclase), acts by impairing membrane integrity. This chain is Pycsar effector protein TpPycTM, found in Treponema porcinum.